The following is a 398-amino-acid chain: E3 ubiquitin-protein ligase RSL1 (398 aa).

The tract at residues 155–374 (QKETCNICLN…LDLTQCCGSC (220 aa)) is TRIAD supradomain. Residues Cys-159, Cys-162, Cys-183, Cys-186, Cys-246, Cys-251, Cys-271, Cys-274, Cys-279, Cys-282, His-287, Cys-292, Cys-321, and Cys-324 each coordinate Zn(2+). An RING-type 3; degenerate zinc finger spans residues 159-207 (CNICLNDDINADQMFSVDKSGHMCCSECVKRHIEVRLLEGSLITCPHYR). The segment at 159 to 208 (CNICLNDDINADQMFSVDKSGHMCCSECVKRHIEVRLLEGSLITCPHYRC) adopts an RING-type 1 zinc-finger fold. The IBR-type zinc-finger motif lies at 233 to 292 (TKDELIPVMDRVYCPNPRCSTLMSETELSGLNIGVRRCCVKCGEPFCVKCKVSWHNNLSC). Residues 321-349 (CSKCKHMIELSSGCISVVCRCGHTFCYQC) form an RING-type 2; atypical zinc finger. Residues 321–356 (CSKCKHMIELSSGCISVVCRCGHTFCYQCGADAGDC) form an RING-type 4; degenerate zinc finger. Cys-334 is a catalytic residue. Residues Cys-339, Cys-341, Cys-346, Cys-349, His-358, and Cys-370 each coordinate Zn(2+). The chain crosses the membrane as a helical span at residues 374–394 (CCCFVFFLVIIAIVVTIILLV).

This sequence belongs to the RBR family. As to quaternary structure, interacts with the PYL4 and PYR1 ABA receptors at the plasma membrane. The cofactor is Zn(2+).

It is found in the cell membrane. It localises to the vacuole membrane. It catalyses the reaction [E2 ubiquitin-conjugating enzyme]-S-ubiquitinyl-L-cysteine + [acceptor protein]-L-lysine = [E2 ubiquitin-conjugating enzyme]-L-cysteine + [acceptor protein]-N(6)-ubiquitinyl-L-lysine.. Its pathway is protein modification; protein ubiquitination. In terms of biological role, acts as an E3 ubiquitin-protein ligase, or as part of E3 complex, which accepts ubiquitin from specific E2 ubiquitin-conjugating enzymes and then transfers it to substrates. Negative regulator of the abscisic acid (ABA) signaling pathway which targets PYL4 and PYR1 ABA receptors in plasma membrane to promote their FREE1/FYVE1-dependent trafficking and degradation upon ubiquitynation; this process involves clathrin-mediated endocytosis and trafficking through the ESCRT pathway. Involved in the maintenance of seed longevity. May enhance gibberellins responses. This is E3 ubiquitin-protein ligase RSL1 from Arabidopsis thaliana (Mouse-ear cress).